A 212-amino-acid polypeptide reads, in one-letter code: Uracil phosphoribosyltransferase (212 aa).

Residues R78, R103, and 130-138 (DPMLATGSS) contribute to the 5-phospho-alpha-D-ribose 1-diphosphate site. Residues I193 and 198–200 (GDA) contribute to the uracil site. D199 contacts 5-phospho-alpha-D-ribose 1-diphosphate.

The protein belongs to the UPRTase family. Mg(2+) serves as cofactor.

It carries out the reaction UMP + diphosphate = 5-phospho-alpha-D-ribose 1-diphosphate + uracil. Its pathway is pyrimidine metabolism; UMP biosynthesis via salvage pathway; UMP from uracil: step 1/1. With respect to regulation, allosterically activated by GTP. Catalyzes the conversion of uracil and 5-phospho-alpha-D-ribose 1-diphosphate (PRPP) to UMP and diphosphate. This Pseudomonas syringae pv. tomato (strain ATCC BAA-871 / DC3000) protein is Uracil phosphoribosyltransferase.